A 971-amino-acid polypeptide reads, in one-letter code: Endoplasmic reticulum calcium ATPase srcA (971 aa).

Topologically, residues 1–25 (MNNEALAEDPPTPLWELVLEQFKDQ) are cytoplasmic. The helical transmembrane segment at 26–46 (LVLILLGSAAVSFVLALFEEG) threads the bilayer. The Lumenal segment spans residues 47–49 (DDW). Residues 50-70 (TAFVDPVVILTILILNAVVGV) traverse the membrane as a helical segment. The Cytoplasmic segment spans residues 71–217 (TQESSAEKAI…PTPLKQKLND (147 aa)). Residues 218–238 (FGDMLAKVITVICVLVWLINV) traverse the membrane as a helical segment. Topologically, residues 239 to 262 (EHFNDPAHGGWAKGAIYYLKIAVS) are lumenal. The chain crosses the membrane as a helical span at residues 263–283 (LGVAAIPEGLAVVITTCLALG). Residues Val265, Ala266, Ile268, and Glu270 each coordinate Ca(2+). At 284–718 (TRKMAAKNAV…GRSIYSNTQQ (435 aa)) the chain is on the cytoplasmic side. The active-site 4-aspartylphosphate intermediate is Asp312. The Mg(2+) site is built by Asp312 and Thr314. Thr314, Glu402, Arg453, Lys473, Arg518, Arg637, and Lys643 together coordinate ATP. Asp662 provides a ligand contact to Mg(2+). Asn665 serves as a coordination point for ATP. The helical transmembrane segment at 719–741 (FIRYLISSNIGEVVSIFLTAALG) threads the bilayer. Ca(2+) is bound by residues Asn727 and Glu730. Topologically, residues 742-750 (MPEALIPVQ) are lumenal. A helical membrane pass occupies residues 751 to 770 (LLWVNLVTDGLPATALSFNP). 3 residues coordinate Ca(2+): Asn755, Thr758, and Asp759. The Cytoplasmic segment spans residues 771–795 (PDHDVMRRAPRKRDEPLVGGWLLFR). A helical membrane pass occupies residues 796-816 (YLAIGTYVGAATVFGYIWWFV). At 817–854 (YNPEGPQISFWQLSHFHKCSAQFPEIGCEMFSNEMSRS) the chain is on the lumenal side. Residues 855–875 (ASTVSLSILVVIEMLNAMNAL) traverse the membrane as a helical segment. Glu867 serves as a coordination point for Ca(2+). The Cytoplasmic segment spans residues 876–891 (SSSESLLAFPLWNNMM). A helical membrane pass occupies residues 892 to 912 (LVYAIILSMTLHFAILYIPFL). Topologically, residues 913 to 917 (QTLFS) are lumenal. A helical membrane pass occupies residues 918 to 938 (ILPLNWTEWKAVLAISAPVVA). Residues 939–971 (IDELLKYAERRLYTLPAIAGEQQNGVAFKPKKA) lie on the Cytoplasmic side of the membrane.

Belongs to the cation transport ATPase (P-type) (TC 3.A.3) family. Requires Mg(2+) as cofactor.

Its subcellular location is the endoplasmic reticulum membrane. It carries out the reaction Ca(2+)(in) + ATP + H2O = Ca(2+)(out) + ADP + phosphate + H(+). Its function is as follows. Magnesium-dependent enzyme catalyzes the hydrolysis of ATP coupled with the translocation of calcium from the cytosol to the endoplasmic reticulum lumen. Its activity is coupled to the unfolded protein response (UPR) and Ca(2+) import into the endoplasmioc reticulum is important for redox homeostasis, virulence, cell wall biosynthesis, and resistance to antifungal compounds that inhibit Ca2+ signaling. With pmrA, promotes radial growth and conidiation. In Aspergillus fumigatus (strain ATCC MYA-4609 / CBS 101355 / FGSC A1100 / Af293) (Neosartorya fumigata), this protein is Endoplasmic reticulum calcium ATPase srcA (srcA).